Reading from the N-terminus, the 531-residue chain is MCYFISKKKGLGGFFLKKNENIRWQQHFLYPLLFHNDFYVIDPNLLFNSSPSFEKIEKLPNSFRFLNVKRSIKLLHQQNYLVYNTRSSCFNFIGKTFFFCFDIFVSTWWKHFFGFKVTFKEINQQVNFQSVFSLFLFLEEVFMFSLSFSNIRIPSSIHSELLIRRFKFSIQDVSFLHFLSFILFSKQFKFVNNSIIFPRGNVIFCFFLGNILLSIFEDFFTLRWKSCFHEKSLSYGLFSEQKHFQQKWNFLTRKPKKKDTIRLLKDFFFHYIRYGEKLILLGTTILVKKCEFFFLNFWQTYLFVLSEPSSFFLKQISSQNIFFLAYYLEYPTNSFLLRLNILDYFLSTDFVGRELNSKLSAVFVIQFLSKEGLCDIMGNPKSKLAWLSFTDNSILDKYDHFCRNVDSFYSEAINKRFLDRVKDILFLSCIKTLACKHKSTIRIVRKELGFELRKIFVRKQVEFKNKKLLYFCFHKQFRKLLFKIDLVTERLWFLDILEVNNFTKFWVKQQNALDFFFIFDQNIWFMLDQFL.

The protein belongs to the intron maturase 2 family. MatK subfamily.

The protein resides in the plastid. The protein localises to the chloroplast. In terms of biological role, usually encoded in the trnK tRNA gene intron. Probably assists in splicing its own and other chloroplast group II introns. The protein is Maturase K of Ephedra sinica (Chinese ephedra).